Reading from the N-terminus, the 1070-residue chain is Inactive tyrosine-protein kinase 7 (1070 aa).

Residues 1 to 30 form the signal peptide; the sequence is MGAARGSPARPRRLPLLSVLLLPLLGGTQT. Ig-like C2-type domains follow at residues 31-120, 128-218, 225-317, 309-407, 412-497, 503-586, and 578-680; these read AIVF…ASFN, PVVL…FTLS, ARVV…EATL, PPII…VNIT, PSWL…ARVQ, KFTP…HVQL, and GQIR…APLY. At 31–704 the chain is on the extracellular side; the sequence is AIVFIKQPSS…SPPPYKMIQT (674 aa). A disulfide bond links cysteine 53 and cysteine 101. N-linked (GlcNAc...) asparagine glycosylation is found at asparagine 116, asparagine 175, asparagine 184, asparagine 214, asparagine 268, and asparagine 283. A disulfide bridge links cysteine 150 with cysteine 200. 2 disulfide bridges follow: cysteine 246–cysteine 301 and cysteine 343–cysteine 391. N-linked (GlcNAc...) asparagine glycans are attached at residues asparagine 405, asparagine 463, asparagine 567, and asparagine 646. 3 cysteine pairs are disulfide-bonded: cysteine 433/cysteine 481, cysteine 524/cysteine 570, and cysteine 613/cysteine 664. The chain crosses the membrane as a helical span at residues 705-725; it reads IGLSVGAAVAYIIAVLGLMFY. The Cytoplasmic portion of the chain corresponds to 726–1070; it reads CKKRCKAKRL…LGDSTVDSKP (345 aa). Disordered stretches follow at residues 736–759 and 773–793; these read QKQP…NGQP and GSGP…HFPR. The segment at 794–1070 is interaction with CTNNB1; sequence SSLQPITTLG…LGDSTVDSKP (277 aa). The 271-residue stretch at 796-1066 folds into the Protein kinase; inactive domain; sequence LQPITTLGKS…IASALGDSTV (271 aa). Serine 1064 is modified (phosphoserine).

Belongs to the protein kinase superfamily. Tyr protein kinase family. Insulin receptor subfamily. Interacts with CTNNB1. Post-translationally, MMP14 cleaves PTK7 between Pro-621 and Leu-622 generating an N-terminal soluble (70 kDa) fragment and a membrane C-terminal (50 kDa) fragment. Proteolysis by MMP14 regulates PTK7 function in non-canonical Wnt signaling pathway. As to expression, highly expressed in lung, liver, pancreas, kidney, placenta and melanocytes. Weakly expressed in thyroid gland, ovary, brain, heart and skeletal muscle. Also expressed in erythroleukemia cells. But not expressed in colon.

It localises to the membrane. The protein resides in the cell junction. In terms of biological role, inactive tyrosine kinase involved in Wnt signaling pathway. Component of both the non-canonical (also known as the Wnt/planar cell polarity signaling) and the canonical Wnt signaling pathway. Functions in cell adhesion, cell migration, cell polarity, proliferation, actin cytoskeleton reorganization and apoptosis. Has a role in embryogenesis, epithelial tissue organization and angiogenesis. This is Inactive tyrosine-protein kinase 7 (PTK7) from Homo sapiens (Human).